A 435-amino-acid chain; its full sequence is D-aminoacyl-tRNA deacylase (435 aa).

The protein belongs to the DtdA deacylase family. As to quaternary structure, monomer. Zn(2+) is required as a cofactor.

The catalysed reaction is a D-aminoacyl-tRNA + H2O = a tRNA + a D-alpha-amino acid + H(+). It catalyses the reaction glycyl-tRNA(Ala) + H2O = tRNA(Ala) + glycine + H(+). Functionally, D-aminoacyl-tRNA deacylase with broad substrate specificity. By recycling D-aminoacyl-tRNA to D-amino acids and free tRNA molecules, this enzyme counteracts the toxicity associated with the formation of D-aminoacyl-tRNA entities in vivo. This is D-aminoacyl-tRNA deacylase from Methanosphaerula palustris (strain ATCC BAA-1556 / DSM 19958 / E1-9c).